Consider the following 111-residue polypeptide: Disintegrin lebein-1-alpha (111 aa).

The N-terminal stretch at 1-20 (MIQVLLVTICLAVFPYQGSS) is a signal peptide. The propeptide occupies 21–47 (IILESGNVNDYEIVYPKKVTVLPTGAM). In terms of domain architecture, Disintegrin spans 47–111 (MNSGNPCCDP…SDCPRNPYKD (65 aa)). 4 disulfides stabilise this stretch: Cys53-Cys76, Cys67-Cys73, Cys72-Cys97, and Cys85-Cys104. Residues 89 to 91 (RGD) carry the Cell attachment site motif.

Belongs to the disintegrin family. Dimeric disintegrin subfamily. As to quaternary structure, heterodimer with subunit beta; disulfide-linked. Expressed by the venom gland.

It localises to the secreted. Its function is as follows. Strongly inhibits ADP-induced platelet aggregation on human platelet-rich plasma. Also avidly binds to the laminin-binding beta-1 integrins (alpha-3/beta-1, alpha-6/beta-1, and alpha-7/beta-1) in an RGD-independent manner. The chain is Disintegrin lebein-1-alpha from Macrovipera lebetinus (Levantine viper).